Here is a 324-residue protein sequence, read N- to C-terminus: Dolichyl-phosphate beta-glucosyltransferase (324 aa).

Residues Met-1 to Gln-7 are Lumenal-facing. Residues Leu-8–Phe-28 form a helical membrane-spanning segment. Topologically, residues Ile-29–Ser-324 are cytoplasmic.

It belongs to the glycosyltransferase 2 family.

It localises to the endoplasmic reticulum membrane. It catalyses the reaction a di-trans,poly-cis-dolichyl phosphate + UDP-alpha-D-glucose = a di-trans,poly-cis-dolichyl beta-D-glucosyl phosphate + UDP. It functions in the pathway protein modification; protein glycosylation. Its function is as follows. Dolichyl-phosphate beta-glucosyltransferase that operates in the biosynthetic pathway of dolichol-linked oligosaccharides, the glycan precursors employed in protein asparagine (N)-glycosylation. The assembly of dolichol-linked oligosaccharides begins on the cytosolic side of the endoplasmic reticulum membrane and finishes in its lumen. The sequential addition of sugars to dolichol pyrophosphate produces dolichol-linked oligosaccharides containing fourteen sugars, including two GlcNAcs, nine mannoses and three glucoses. Once assembled, the oligosaccharide is transferred from the lipid to nascent proteins by oligosaccharyltransferases. Dolichyl-phosphate beta-glucosyltransferase produces dolichyl beta-D-glucosyl phosphate/Dol-P-Glc, the glucose donor substrate used sequentially by ALG6, ALG8 and ALG10 to add glucose residues on top of the Man(9)GlcNAc(2)-PP-Dol structure. These are the three last steps in the biosynthetic pathway of dolichol-linked oligosaccharides to produce Glc(3)Man(9)GlcNAc(2)-PP-Dol. The enzyme is most probably active on the cytoplasmic side of the endoplasmic reticulum while its product Dol-P-Glc is the substrate for ALG6, ALG8 and ALG11 in the lumen of the endoplasmic reticulum. The sequence is that of Dolichyl-phosphate beta-glucosyltransferase from Mus musculus (Mouse).